The following is a 438-amino-acid chain: Lipid-A-disaccharide synthase (438 aa).

It belongs to the LpxB family.

It catalyses the reaction a lipid X + a UDP-2-N,3-O-bis[(3R)-3-hydroxyacyl]-alpha-D-glucosamine = a lipid A disaccharide + UDP + H(+). It participates in bacterial outer membrane biogenesis; LPS lipid A biosynthesis. In terms of biological role, condensation of UDP-2,3-diacylglucosamine and 2,3-diacylglucosamine-1-phosphate to form lipid A disaccharide, a precursor of lipid A, a phosphorylated glycolipid that anchors the lipopolysaccharide to the outer membrane of the cell. This chain is Lipid-A-disaccharide synthase, found in Xanthomonas campestris pv. campestris (strain 8004).